The primary structure comprises 323 residues: tRNA dimethylallyltransferase (323 aa).

12–19 contacts ATP; the sequence is GPTAAGKT. Residue 14–19 participates in substrate binding; the sequence is TAAGKT. Interaction with substrate tRNA regions lie at residues 37 to 40 and 161 to 165; these read DSAL and QRLIR.

Belongs to the IPP transferase family. In terms of assembly, monomer. The cofactor is Mg(2+).

It carries out the reaction adenosine(37) in tRNA + dimethylallyl diphosphate = N(6)-dimethylallyladenosine(37) in tRNA + diphosphate. Its function is as follows. Catalyzes the transfer of a dimethylallyl group onto the adenine at position 37 in tRNAs that read codons beginning with uridine, leading to the formation of N6-(dimethylallyl)adenosine (i(6)A). The protein is tRNA dimethylallyltransferase of Pseudomonas entomophila (strain L48).